The following is a 562-amino-acid chain: NAD-dependent malic enzyme (562 aa).

Residue Y101 is the Proton donor of the active site. Residue R154 participates in NAD(+) binding. K172 functions as the Proton acceptor in the catalytic mechanism. The a divalent metal cation site is built by E243, D244, and D267. Positions 267 and 415 each coordinate NAD(+).

This sequence belongs to the malic enzymes family. As to quaternary structure, homotetramer. The cofactor is Mg(2+). It depends on Mn(2+) as a cofactor.

The enzyme catalyses (S)-malate + NAD(+) = pyruvate + CO2 + NADH. It catalyses the reaction oxaloacetate + H(+) = pyruvate + CO2. This Shewanella sediminis (strain HAW-EB3) protein is NAD-dependent malic enzyme.